An 89-amino-acid polypeptide reads, in one-letter code: Small ribosomal subunit protein uS17 (89 aa).

The protein belongs to the universal ribosomal protein uS17 family. As to quaternary structure, part of the 30S ribosomal subunit.

Functionally, one of the primary rRNA binding proteins, it binds specifically to the 5'-end of 16S ribosomal RNA. This Ralstonia nicotianae (strain ATCC BAA-1114 / GMI1000) (Ralstonia solanacearum) protein is Small ribosomal subunit protein uS17.